Here is a 196-residue protein sequence, read N- to C-terminus: MQPINTFQAKAVALPIENIDTDQIIPARYLKVTDKNGLGEALFTDWRGEPDFVLNQPYAQGAGVLIAGHNFGCGSSREHAPWALQGFGFQAVISTYFADIFKGNALKNGLLPIVVDAPTLARLTEQCLANQTIDVSVDLENQQVHVAGETISFPIDAFSKHCLLHGVDQLGYIQAQETAIQAYEASHAARVNTVGA.

This sequence belongs to the LeuD family. LeuD type 1 subfamily. In terms of assembly, heterodimer of LeuC and LeuD.

It catalyses the reaction (2R,3S)-3-isopropylmalate = (2S)-2-isopropylmalate. The protein operates within amino-acid biosynthesis; L-leucine biosynthesis; L-leucine from 3-methyl-2-oxobutanoate: step 2/4. In terms of biological role, catalyzes the isomerization between 2-isopropylmalate and 3-isopropylmalate, via the formation of 2-isopropylmaleate. The chain is 3-isopropylmalate dehydratase small subunit from Herpetosiphon aurantiacus (strain ATCC 23779 / DSM 785 / 114-95).